The chain runs to 326 residues: Flotillin-like protein FloA (326 aa).

A helical transmembrane segment spans residues 3–23 (FTTIVVILLVIACIVVLFFIG).

It belongs to the flotillin-like FloA family. In terms of assembly, homooligomerizes.

Its subcellular location is the cell membrane. It localises to the membrane raft. Its function is as follows. Found in functional membrane microdomains (FMM) that may be equivalent to eukaryotic membrane rafts. FMMs are highly dynamic and increase in number as cells age. Flotillins are thought to be important factors in membrane fluidity. The polypeptide is Flotillin-like protein FloA (Desulforapulum autotrophicum (strain ATCC 43914 / DSM 3382 / VKM B-1955 / HRM2) (Desulfobacterium autotrophicum)).